The following is a 142-amino-acid chain: Large ribosomal subunit protein uL11 (142 aa).

The protein belongs to the universal ribosomal protein uL11 family. As to quaternary structure, part of the ribosomal stalk of the 50S ribosomal subunit. Interacts with L10 and the large rRNA to form the base of the stalk. L10 forms an elongated spine to which L12 dimers bind in a sequential fashion forming a multimeric L10(L12)X complex. One or more lysine residues are methylated.

Functionally, forms part of the ribosomal stalk which helps the ribosome interact with GTP-bound translation factors. This chain is Large ribosomal subunit protein uL11, found in Sinorhizobium medicae (strain WSM419) (Ensifer medicae).